A 933-amino-acid chain; its full sequence is 2-oxoglutarate dehydrogenase E1 component (933 aa).

Belongs to the alpha-ketoglutarate dehydrogenase family. In terms of assembly, homodimer. Part of the 2-oxoglutarate dehydrogenase (OGDH) complex composed of E1 (2-oxoglutarate dehydrogenase), E2 (dihydrolipoamide succinyltransferase) and E3 (dihydrolipoamide dehydrogenase); the complex contains multiple copies of the three enzymatic components (E1, E2 and E3). Requires thiamine diphosphate as cofactor.

The enzyme catalyses N(6)-[(R)-lipoyl]-L-lysyl-[protein] + 2-oxoglutarate + H(+) = N(6)-[(R)-S(8)-succinyldihydrolipoyl]-L-lysyl-[protein] + CO2. Functionally, E1 component of the 2-oxoglutarate dehydrogenase (OGDH) complex which catalyzes the decarboxylation of 2-oxoglutarate, the first step in the conversion of 2-oxoglutarate to succinyl-CoA and CO(2). The sequence is that of 2-oxoglutarate dehydrogenase E1 component (sucA) from Rickettsia typhi (strain ATCC VR-144 / Wilmington).